The chain runs to 306 residues: Agmatinase (306 aa).

The Mn(2+) site is built by H126, D149, H151, D153, D230, and D232.

It belongs to the arginase family. Agmatinase subfamily. It depends on Mn(2+) as a cofactor.

It catalyses the reaction agmatine + H2O = urea + putrescine. Its pathway is amine and polyamine biosynthesis; putrescine biosynthesis via agmatine pathway; putrescine from agmatine: step 1/1. Its function is as follows. Catalyzes the formation of putrescine from agmatine. The protein is Agmatinase of Escherichia coli (strain SE11).